Consider the following 473-residue polypeptide: 3-isopropylmalate dehydratase large subunit (473 aa).

C348, C408, and C411 together coordinate [4Fe-4S] cluster.

This sequence belongs to the aconitase/IPM isomerase family. LeuC type 1 subfamily. As to quaternary structure, heterodimer of LeuC and LeuD. [4Fe-4S] cluster is required as a cofactor.

It carries out the reaction (2R,3S)-3-isopropylmalate = (2S)-2-isopropylmalate. It functions in the pathway amino-acid biosynthesis; L-leucine biosynthesis; L-leucine from 3-methyl-2-oxobutanoate: step 2/4. In terms of biological role, catalyzes the isomerization between 2-isopropylmalate and 3-isopropylmalate, via the formation of 2-isopropylmaleate. The protein is 3-isopropylmalate dehydratase large subunit of Haloarcula marismortui (strain ATCC 43049 / DSM 3752 / JCM 8966 / VKM B-1809) (Halobacterium marismortui).